We begin with the raw amino-acid sequence, 164 residues long: Protein-export protein SecB (164 aa).

This sequence belongs to the SecB family. In terms of assembly, homotetramer, a dimer of dimers. One homotetramer interacts with 1 SecA dimer.

It is found in the cytoplasm. Functionally, one of the proteins required for the normal export of preproteins out of the cell cytoplasm. It is a molecular chaperone that binds to a subset of precursor proteins, maintaining them in a translocation-competent state. It also specifically binds to its receptor SecA. This Burkholderia orbicola (strain MC0-3) protein is Protein-export protein SecB.